The sequence spans 324 residues: Glucosyl-3-phosphoglycerate synthase (324 aa).

Residues 50 to 54 (PALNE), serine 81, lysine 114, and 134 to 135 (DS) each bind UDP-alpha-D-glucose. Aspartate 136 lines the Mn(2+) pocket. 184–187 (GRVT) is a (2R)-3-phosphoglycerate binding site. Residues 229–232 (YGVE) and 256–261 (RAHRNR) contribute to the UDP-alpha-D-glucose site. Histidine 258 contributes to the Mn(2+) binding site. Residue asparagine 260 coordinates (2R)-3-phosphoglycerate.

This sequence belongs to the glycosyltransferase 2 family. Homotrimer. Mg(2+) is required as a cofactor. It depends on Mn(2+) as a cofactor.

It carries out the reaction an NDP-alpha-D-glucose + (2R)-3-phosphoglycerate = (2R)-2-O-(alpha-D-glucopyranosyl)-3-phospho-glycerate + a ribonucleoside 5'-diphosphate + H(+). The enzyme catalyses (2R)-3-phosphoglycerate + UDP-alpha-D-glucose = (2R)-2-O-(alpha-D-glucopyranosyl)-3-phospho-glycerate + UDP + H(+). The catalysed reaction is ADP-alpha-D-glucose + (2R)-3-phosphoglycerate = (2R)-2-O-(alpha-D-glucopyranosyl)-3-phospho-glycerate + ADP + H(+). It catalyses the reaction GDP-D-glucose + (2R)-3-phosphoglycerate = (2R)-2-O-(alpha-D-glucopyranosyl)-3-phospho-glycerate + GDP + H(+). Functionally, involved in the biosynthesis of 6-O-methylglucose lipopolysaccarides (MGLPs). Catalyzes the transfer of the glucose moiety from a nuleotide sugar such as UDP-alpha-D-glucose to the position 2 of 3-phospho-D-glycerate (3-PGA) to form glucosyl-3-phosphoglycerate (GPG). It can use UDP-glucose, ADP-glucose and GDP-glucose as sugar donor substrates with decreasing affinity and with 3-PGA as an acceptor. D-glycerate can only be an acceptor with ADP-glucose and at a very low rate. The polypeptide is Glucosyl-3-phosphoglycerate synthase (gpgS) (Mycobacterium bovis (strain ATCC BAA-935 / AF2122/97)).